The following is a 140-amino-acid chain: Large ribosomal subunit protein uL22 (140 aa).

Positions 115-140 (AKPAAAKKDPKAAAAKADANAGTKEG) are disordered.

This sequence belongs to the universal ribosomal protein uL22 family. In terms of assembly, part of the 50S ribosomal subunit.

This protein binds specifically to 23S rRNA; its binding is stimulated by other ribosomal proteins, e.g. L4, L17, and L20. It is important during the early stages of 50S assembly. It makes multiple contacts with different domains of the 23S rRNA in the assembled 50S subunit and ribosome. Functionally, the globular domain of the protein is located near the polypeptide exit tunnel on the outside of the subunit, while an extended beta-hairpin is found that lines the wall of the exit tunnel in the center of the 70S ribosome. The polypeptide is Large ribosomal subunit protein uL22 (Heliobacterium modesticaldum (strain ATCC 51547 / Ice1)).